A 215-amino-acid polypeptide reads, in one-letter code: Ras-related protein SEC4 (215 aa).

A GTP-binding site is contributed by 27–34; it reads GDSGVGKS. The Effector region motif lies at 49-57; that stretch reads FITTIGIDF. GTP is bound by residues 75-79 and 133-136; these read DTAGQ and NKSD. 2 positions are modified to phosphoserine: S201 and S204. Residues C214 and C215 are each lipidated (S-geranylgeranyl cysteine).

This sequence belongs to the small GTPase superfamily. Rab family. As to quaternary structure, interacts with the guanyl-nucleotide exchange factor SEC2. Interacts with SRO7, YIF1, YIP3, YIP4 and YIP5.

The protein resides in the cytoplasmic vesicle. The protein localises to the secretory vesicle membrane. It is found in the cell membrane. Its subcellular location is the cytoplasm. In terms of biological role, involved in exocytosis. Maybe by regulating the binding and fusion of secretory vesicles with the cell surface. The GTP-bound form of SEC4 may interact with an effector, thereby stimulating its activity and leading to exocytotic fusion. SEC4 may be an upstream activator of the 19.5S SEC8/SEC15 particle. SEC4 probably interacts directly with SEC8; it could serve as the attachment site for the SEC8/SEC15 particle. This Saccharomyces cerevisiae (strain ATCC 204508 / S288c) (Baker's yeast) protein is Ras-related protein SEC4 (SEC4).